We begin with the raw amino-acid sequence, 221 residues long: Orotate phosphoribosyltransferase (221 aa).

5-phospho-alpha-D-ribose 1-diphosphate is bound at residue Lys26. Residue 34–35 (FF) coordinates orotate. 5-phospho-alpha-D-ribose 1-diphosphate is bound by residues 72 to 73 (YK), Arg98, Lys99, Lys102, His104, and 123 to 131 (DDVISAGTS). Residues Ser127 and Arg155 each contribute to the orotate site.

It belongs to the purine/pyrimidine phosphoribosyltransferase family. PyrE subfamily. Homodimer. Mg(2+) serves as cofactor.

It catalyses the reaction orotidine 5'-phosphate + diphosphate = orotate + 5-phospho-alpha-D-ribose 1-diphosphate. It functions in the pathway pyrimidine metabolism; UMP biosynthesis via de novo pathway; UMP from orotate: step 1/2. Its function is as follows. Catalyzes the transfer of a ribosyl phosphate group from 5-phosphoribose 1-diphosphate to orotate, leading to the formation of orotidine monophosphate (OMP). This Janthinobacterium sp. (strain Marseille) (Minibacterium massiliensis) protein is Orotate phosphoribosyltransferase.